A 321-amino-acid polypeptide reads, in one-letter code: AA9 family lytic polysaccharide monooxygenase A (321 aa).

Positions 1–21 (MFRAQSFLPVLALVLRVAAHG) are cleaved as a signal peptide. A Cu(2+)-binding site is contributed by His-20. Residues Cys-71 and Cys-197 are joined by a disulfide bond. An N-linked (GlcNAc...) asparagine glycan is attached at Asn-72. His-105 contributes to the Cu(2+) binding site. N-linked (GlcNAc...) asparagine glycosylation is present at Asn-157. O2-binding residues include His-183 and Gln-192. Tyr-194 contributes to the Cu(2+) binding site. Positions 278–306 (SSSAAATQSSSAAPSSSAIGTSTASSAAA) are disordered. Residue Ser-293 is the site of GPI-anchor amidated serine attachment. A propeptide spans 294-321 (SAIGTSTASSAAASGTAIVDANTCMNSA) (removed in mature form).

The protein belongs to the polysaccharide monooxygenase AA9 family. Requires Cu(2+) as cofactor.

The protein resides in the cell membrane. The enzyme catalyses [(1-&gt;4)-beta-D-glucosyl]n+m + reduced acceptor + O2 = 4-dehydro-beta-D-glucosyl-[(1-&gt;4)-beta-D-glucosyl]n-1 + [(1-&gt;4)-beta-D-glucosyl]m + acceptor + H2O.. In terms of biological role, lytic polysaccharide monooxygenase (LPMO) that depolymerizes crystalline and amorphous polysaccharides via the oxidation of scissile alpha- or beta-(1-4)-glycosidic bonds, yielding C1 or C4 oxidation products. Catalysis by LPMOs requires the reduction of the active-site copper from Cu(II) to Cu(I) by a reducing agent and H(2)O(2) or O(2) as a cosubstrate. Has broad specificity, cleaving at any position along the beta-glucan backbone of xyloglucan, regardless of substitutions. Shows minor activity on glucomannan. This is AA9 family lytic polysaccharide monooxygenase A from Gloeophyllum trabeum (strain ATCC 11539 / FP-39264 / Madison 617) (Brown rot fungus).